The following is a 274-amino-acid chain: Orotidine 5'-phosphate decarboxylase (274 aa).

Lys96 (proton donor) is an active-site residue.

Belongs to the OMP decarboxylase family. Type 2 subfamily.

It catalyses the reaction orotidine 5'-phosphate + H(+) = UMP + CO2. Its pathway is pyrimidine metabolism; UMP biosynthesis via de novo pathway; UMP from orotate: step 2/2. This Bacteroides fragilis (strain ATCC 25285 / DSM 2151 / CCUG 4856 / JCM 11019 / LMG 10263 / NCTC 9343 / Onslow / VPI 2553 / EN-2) protein is Orotidine 5'-phosphate decarboxylase.